Here is a 115-residue protein sequence, read N- to C-terminus: Large ribosomal subunit protein bL20c (115 aa).

It belongs to the bacterial ribosomal protein bL20 family.

It localises to the plastid. The protein localises to the chloroplast. Functionally, binds directly to 23S ribosomal RNA and is necessary for the in vitro assembly process of the 50S ribosomal subunit. It is not involved in the protein synthesizing functions of that subunit. The sequence is that of Large ribosomal subunit protein bL20c from Chaetosphaeridium globosum (Charophycean green alga).